The following is a 334-amino-acid chain: Syntaxin-18 (334 aa).

At 1–308 (MAVDITLLFR…EDIREAIKNN (308 aa)) the chain is on the cytoplasmic side. 2 disordered regions span residues 29–50 (GGAD…GDFS) and 166–225 (LSKL…GEDE). Basic and acidic residues-rich tracts occupy residues 33-50 (GSRD…GDFS) and 166-182 (LSKL…DSTS). Over residues 183–192 (EKAPQNASQD) the composition is skewed to polar residues. A compositionally biased stretch (basic and acidic residues) spans 193 to 207 (SEGKPAAEELPEKPL). Residues 242-304 (IGEMNSLFDE…KEGNEDIREA (63 aa)) enclose the t-SNARE coiled-coil homology domain. Residues 309–329 (AGFRVWILFFLVMCSFSLLFL) traverse the membrane as a helical; Anchor for type IV membrane protein segment. Residues 330 to 334 (DWYDS) lie on the Lumenal side of the membrane.

It belongs to the syntaxin family. In terms of assembly, component of a SNARE complex consisting of STX18, USE1L, BNIP1/SEC20L, and SEC22B. RINT1/TIP20L and ZW10 are associated with the complex through interaction with BNIP1/SEC20L. Interacts directly with USE1L and BNIP1/SEC20L.

Its subcellular location is the endoplasmic reticulum membrane. It localises to the golgi apparatus membrane. Its function is as follows. Syntaxin that may be involved in targeting and fusion of Golgi-derived retrograde transport vesicles with the ER. This chain is Syntaxin-18 (Stx18), found in Mus musculus (Mouse).